Consider the following 312-residue polypeptide: Taste receptor type 2 member 7 (312 aa).

Topologically, residues 1 to 9 are extracellular; that stretch reads MTYETDTTL. Residues 10-30 traverse the membrane as a helical segment; the sequence is MLVAVGEALVGILGNAFIALV. Topologically, residues 31–49 are cytoplasmic; that stretch reads NFMGWMKNRKIASIDLILS. A helical transmembrane segment spans residues 50-70; that stretch reads SVAMSRICLQCIILLDCIILV. Residues 71 to 101 are Extracellular-facing; it reads QYPDTYNRGKEMRTVDFFWTLTNHLSVWFAT. The chain crosses the membrane as a helical span at residues 102 to 122; the sequence is CLSIFYLFKIANFFHPLFLWI. At 123-128 the chain is on the cytoplasmic side; that stretch reads KWRIDK. Residues 129–149 traverse the membrane as a helical segment; it reads LILRTLLACVIISLCFSLPVT. At 150–187 the chain is on the extracellular side; it reads ENLSDDFRRCVKTKERINSTLRCKVNKAGHASVKVNLN. 2 N-linked (GlcNAc...) asparagine glycosylation sites follow: Asn151 and Asn167. A helical membrane pass occupies residues 188 to 208; that stretch reads LVMLFPFSVSLVSFLLLILSL. Over 209–235 the chain is Cytoplasmic; it reads WRHTRQIQLSVTGYKDPSTTAHVKAMK. The chain crosses the membrane as a helical span at residues 236-256; it reads AVISFLALFVVYCLAFLIATS. At 257–266 the chain is on the extracellular side; the sequence is SYFMPESELA. A helical membrane pass occupies residues 267–287; it reads VIWGELIALIYPSSHSFILIL. Residues 288–312 are Cytoplasmic-facing; it reads GSSKLKQASVRVLCRVKTMLKGKKY.

It belongs to the G-protein coupled receptor T2R family. In terms of tissue distribution, expressed in subsets of taste receptor cells of the tongue and palate epithelium and exclusively in gustducin-positive cells. Expressed in 15% taste bud cells in circumvallate and foliate papillae but only in 2% in fungiform papillae. Expressed in gastric and duodenal tissues.

The protein resides in the membrane. Functionally, gustducin-coupled receptor implicated in the perception of bitter compounds in the oral cavity and the gastrointestinal tract. Signals through PLCB2 and the calcium-regulated cation channel TRPM5. The sequence is that of Taste receptor type 2 member 7 (Tas2r7) from Mus musculus (Mouse).